The following is a 1111-amino-acid chain: Cell death abnormality protein 1 (1111 aa).

The N-terminal stretch at 1–18 (MRLILLVLLATWQVVVDT) is a signal peptide. The Extracellular portion of the chain corresponds to 19 to 910 (RAPTFPDKLT…NGAGRSTGLT (892 aa)). The EMI domain occupies 41-113 (GDHVCTVKTI…QCCDGYYQTK (73 aa)). Cystine bridges form between Cys45–Cys106, Cys71–Cys80, Cys105–Cys117, Cys121–Cys130, Cys125–Cys136, Cys138–Cys147, Cys160–Cys172, Cys166–Cys179, Cys181–Cys190, Cys203–Cys215, Cys209–Cys221, Cys223–Cys232, Cys245–Cys257, Cys251–Cys264, and Cys266–Cys275. Asn66 is a glycosylation site (N-linked (GlcNAc...) asparagine). EGF-like domains follow at residues 118-148 (LPDC…KYCA), 156-191 (WGLG…ERCE), 199-233 (WGPN…EFCL), and 241-276 (FGAE…ALCE). Asn333 and Asn345 each carry an N-linked (GlcNAc...) asparagine glycan. Positions 421 to 458 (YGPNCEKQAMCDWNHASECNPETGSCVCKPGRTGKNCS) constitute an EGF-like 5 domain. 3 disulfide bridges follow: Cys425–Cys439, Cys431–Cys446, and Cys448–Cys457. The N-linked (GlcNAc...) asparagine glycan is linked to Asn456. The stretch at 629-680 (DQKCDPNTFGFLCQETVTPSPCASTDPKNGVCLSCPPGSSGIHCEHNCPAGS) is one FU repeat. An EGF-like 6 domain is found at 681 to 716 (YGDGCQQVCSCADGHGCDPTTGECICEPGYHGKTCS). 3 disulfides stabilise this stretch: Cys685-Cys697, Cys691-Cys704, and Cys706-Cys715. The helical transmembrane segment at 911-931 (WFFVLLIVALCGGLGLIALFY) threads the bilayer. Positions 931–1007 (YRNKYQKEKD…EEELENKKIH (77 aa)) are interaction with trim-21. The Cytoplasmic portion of the chain corresponds to 932-1111 (RNKYQKEKDP…KKRAQDNLYT (180 aa)). Disordered regions lie at residues 940 to 993 (DPDM…PNGL) and 1006 to 1111 (IHGR…NLYT). Positions 962 to 965 (NPLY) match the NPXY motif. The segment covering 963–980 (PLYSRQSVFPDSDAFSSE) has biased composition (polar residues). Position 1019 is a phosphotyrosine; by SRC (Tyr1019). The short motif at 1019 to 1022 (YASL) is the YXXL element. The segment covering 1030–1039 (SSSSASASAS) has biased composition (low complexity). Residues 1068-1083 (NSISPAHAVTTSNHNE) show a composition bias toward polar residues.

Interacts (via C-terminus) with ced-6 (via PTB domain). Interacts with nck-1; the interaction is required for ced-1 degradation through the proteasome pathway. Interacts with V-ATPase vha-10. Post-translationally, phosphorylation of Tyr-1019, within the YXXL motif, by src-1 is thought to initiate phagosomal formation. In terms of processing, 'Lys-48'-linked polyubiquitination by trim-21 leads to proteasomal degradation. As to expression, expressed in engulfing cells and syncytium hypodermal cells. Ced-7 is necessary for clustering around cell corpses prior to engulfment.

It localises to the cell membrane. It is found in the cytoplasmic vesicle. Its subcellular location is the phagosome membrane. Its function is as follows. Involved in programmed cell death, also called apoptosis, in both somatic and germ cells. Acts by recruiting ced-6 to phagosomes which enables actin-dependent cytoskeletal reorganization and subsequent engulfment of the apoptotic cell corpse. Has a role in the association of ppk-3 and rab-7 with the phagosomal surface which is necessary for the incorporation of lysosomes to phagosomes during phagosome maturation. Activates the expression of unfolded protein response genes, which are involved in the immune response to live bacteria. This chain is Cell death abnormality protein 1, found in Caenorhabditis elegans.